Consider the following 127-residue polypeptide: Protein chibby homolog 1 (127 aa).

Positions 1–25 (MPLFGSIFSPKKTPPRKSASLSNLH) are disordered. Phosphoserine is present on residues serine 9 and serine 20. Positions 60–112 (VADSVISGGVDRRETQRLRKRNQQLEEENNLLRLKVDILLDMLSETTAESHLK) are minimal region for the interaction with PKD2. A coiled-coil region spans residues 68–110 (GVDRRETQRLRKRNQQLEEENNLLRLKVDILLDMLSETTAESH). A leucine-zipper; mediates homodimerization region spans residues 77 to 98 (LRKRNQQLEEENNLLRLKVDIL).

It belongs to the chibby family. As to quaternary structure, homodimer. Homodimerization is essential for nuclear localization and interaction with KPNA4 but is dispensable for interaction with CTNNB1. Interacts with polycystin-2/PKD2 and GM130. Interacts with the C-terminal region of CTNNB1. Interacts (C-terminus) with TCIM (C-terminus), TCIM competes with CTNNB1 for the interaction with CBY1. Interacts with FAM92A; this interaction facilitates targeting of FAM92A to cilium basal body. Interacts with CIBAR2. Interacts with KPNA4.

It is found in the nucleus speckle. The protein localises to the cytoplasm. It localises to the cytoskeleton. Its subcellular location is the cilium basal body. The protein resides in the microtubule organizing center. It is found in the centrosome. The protein localises to the centriole. It localises to the golgi apparatus. Its subcellular location is the trans-Golgi network. The protein resides in the cell projection. It is found in the cilium. The protein localises to the flagellum. It localises to the nucleus. Functionally, inhibits the Wnt/Wingless pathway by binding to CTNNB1/beta-catenin and inhibiting beta-catenin-mediated transcriptional activation through competition with TCF/LEF transcription factors. Has also been shown to play a role in regulating the intracellular trafficking of polycystin-2/PKD2 and possibly of other intracellular proteins. Promotes adipocyte and cardiomyocyte differentiation. This chain is Protein chibby homolog 1 (Cby1), found in Rattus norvegicus (Rat).